Here is a 255-residue protein sequence, read N- to C-terminus: tRNA (guanine-N(1)-)-methyltransferase (255 aa).

Residues Gly-113 and 133–138 (IGDYVL) contribute to the S-adenosyl-L-methionine site.

This sequence belongs to the RNA methyltransferase TrmD family. In terms of assembly, homodimer.

It is found in the cytoplasm. It carries out the reaction guanosine(37) in tRNA + S-adenosyl-L-methionine = N(1)-methylguanosine(37) in tRNA + S-adenosyl-L-homocysteine + H(+). Its function is as follows. Specifically methylates guanosine-37 in various tRNAs. The polypeptide is tRNA (guanine-N(1)-)-methyltransferase (Salmonella agona (strain SL483)).